The chain runs to 229 residues: Orotidine 5'-phosphate decarboxylase (229 aa).

Residues aspartate 12, lysine 34, 61–70, threonine 116, arginine 177, glutamine 186, glycine 206, and arginine 207 contribute to the substrate site; that span reads DWKLHDIGAT. Lysine 63 functions as the Proton donor in the catalytic mechanism.

The protein belongs to the OMP decarboxylase family. Type 1 subfamily. As to quaternary structure, homodimer.

The enzyme catalyses orotidine 5'-phosphate + H(+) = UMP + CO2. It participates in pyrimidine metabolism; UMP biosynthesis via de novo pathway; UMP from orotate: step 2/2. In terms of biological role, catalyzes the decarboxylation of orotidine 5'-monophosphate (OMP) to uridine 5'-monophosphate (UMP). The chain is Orotidine 5'-phosphate decarboxylase from Caulobacter sp. (strain K31).